A 363-amino-acid polypeptide reads, in one-letter code: Putative C-&gt;U-editing enzyme APOBEC-4 (363 aa).

A CMP/dCMP-type deaminase domain is found at 61–177; sequence PQTKHLTFYE…AWNREALRSL (117 aa). His93 is a binding site for Zn(2+). The Proton donor role is filled by Glu95. 2 residues coordinate Zn(2+): Cys127 and Cys134.

The protein belongs to the cytidine and deoxycytidylate deaminase family. Requires Zn(2+) as cofactor.

Putative C to U editing enzyme whose physiological substrate is not yet known. The protein is Putative C-&gt;U-editing enzyme APOBEC-4 (APOBEC4) of Macaca fascicularis (Crab-eating macaque).